Consider the following 209-residue polypeptide: MDLHNIREDYSKQELSQAHCHADPIQQFEQWLEEAITAKANEPTAMNVATVLDGKPTSRIVLLKEVNPNGFVFFTNYQSRKGQAIEQNPYAALTFFWAELERSVRIEGRIEKISAEESDRYFASRPYTSRVGAWASNQSQVLSGKSELVAKAALIAAKHPLHVPRPPHWGGYIVLPERIEFWQGRPSRLHDRICYRLVEGKWHKERLSP.

Substrate-binding positions include 7–10 (REDY) and lysine 64. Residues 59–64 (RIVLLK), 74–75 (FT), arginine 80, and lysine 81 contribute to the FMN site. Residues tyrosine 121, arginine 125, and serine 129 each coordinate substrate. Residues 138-139 (QS) and tryptophan 182 each bind FMN. 188-190 (RLH) contacts substrate. Arginine 192 is a binding site for FMN.

It belongs to the pyridoxamine 5'-phosphate oxidase family. Homodimer. It depends on FMN as a cofactor.

It carries out the reaction pyridoxamine 5'-phosphate + O2 + H2O = pyridoxal 5'-phosphate + H2O2 + NH4(+). The enzyme catalyses pyridoxine 5'-phosphate + O2 = pyridoxal 5'-phosphate + H2O2. It participates in cofactor metabolism; pyridoxal 5'-phosphate salvage; pyridoxal 5'-phosphate from pyridoxamine 5'-phosphate: step 1/1. The protein operates within cofactor metabolism; pyridoxal 5'-phosphate salvage; pyridoxal 5'-phosphate from pyridoxine 5'-phosphate: step 1/1. Its function is as follows. Catalyzes the oxidation of either pyridoxine 5'-phosphate (PNP) or pyridoxamine 5'-phosphate (PMP) into pyridoxal 5'-phosphate (PLP). This is Pyridoxine/pyridoxamine 5'-phosphate oxidase from Actinobacillus pleuropneumoniae serotype 3 (strain JL03).